A 269-amino-acid polypeptide reads, in one-letter code: Prespore protein Dd31 (269 aa).

A compositionally biased stretch (polar residues) spans 1–17; it reads MEHNNNPGTPQMSSEFP. Residues 1–35 form a disordered region; sequence MEHNNNPGTPQMSSEFPASTTQTSSSAAAYDNSSH. Low complexity predominate over residues 18-29; it reads ASTTQTSSSAAA. 4 consecutive transmembrane segments (helical) span residues 111-131, 139-159, 177-197, and 225-245; these read FGIF…VVSI, VDNF…LYFL, YAYL…FVGF, and VSLF…IMYL.

Belongs to the SCAMP family.

It localises to the membrane. Its subcellular location is the spore coat. In Dictyostelium discoideum (Social amoeba), this protein is Prespore protein Dd31 (spiA).